The chain runs to 227 residues: Pro-thyrotropin-releasing hormone-A (227 aa).

Positions M1–S15 are cleaved as a signal peptide. Q75 bears the Pyrrolidone carboxylic acid mark. The residue at position 77 (P77) is a Proline amide. Q89 bears the Pyrrolidone carboxylic acid mark. Residue P91 is modified to Proline amide. A Pyrrolidone carboxylic acid modification is found at Q107. 2 disordered regions span residues Q107–E128 and R151–G204. Proline amide is present on P109. Basic and acidic residues predominate over residues R112–E128. Position 121 is a pyrrolidone carboxylic acid (Q121). Position 123 is a proline amide (P123). A Pyrrolidone carboxylic acid modification is found at Q153. P155 bears the Proline amide mark. Position 168 is a pyrrolidone carboxylic acid (Q168). Residue P170 is modified to Proline amide. Positions E184 to P201 are enriched in basic and acidic residues. A Pyrrolidone carboxylic acid modification is found at Q193. The residue at position 195 (P195) is a Proline amide.

The protein belongs to the TRH family.

The protein localises to the secreted. The protein is Pro-thyrotropin-releasing hormone-A (trh-a) of Xenopus laevis (African clawed frog).